Reading from the N-terminus, the 225-residue chain is Small ribosomal subunit protein uS3 (225 aa).

The KH type-2 domain occupies Ile39–Asn109.

It belongs to the universal ribosomal protein uS3 family. As to quaternary structure, part of the 30S ribosomal subunit. Forms a tight complex with proteins S10 and S14.

Functionally, binds the lower part of the 30S subunit head. Binds mRNA in the 70S ribosome, positioning it for translation. The sequence is that of Small ribosomal subunit protein uS3 from Mycoplasma mobile (strain ATCC 43663 / 163K / NCTC 11711) (Mesomycoplasma mobile).